A 744-amino-acid chain; its full sequence is TonB-dependent heme receptor A (744 aa).

Positions 1-24 are cleaved as a signal peptide; that stretch reads MNILINKRIFLLVTLVGIQLNVTA. In terms of domain architecture, TBDR plug spans 45–157; the sequence is DDSNKLPGRS…FAGTVKFETK (113 aa). Residues 168-744 form the TBDR beta-barrel domain; sequence KIGGFLKYGN…NIKFSLSQKF (577 aa).

This sequence belongs to the TonB-dependent receptor family.

The protein localises to the cell outer membrane. Functionally, heme receptor. This Haemophilus influenzae (strain ATCC 51907 / DSM 11121 / KW20 / Rd) protein is TonB-dependent heme receptor A (tdhA).